Consider the following 118-residue polypeptide: MARIAGVNIPDNKHTVISLTYIYGVGRTTAQSICAATGVNPAAKIKDLSDEQIDQLRNEVAKITTEGDLRREINMNIKRLMDLGCYRGLRHRRGLPVRGQRTKTNARTRKGPRKPIRK.

The segment at 94-118 (GLPVRGQRTKTNARTRKGPRKPIRK) is disordered.

This sequence belongs to the universal ribosomal protein uS13 family. Part of the 30S ribosomal subunit. Forms a loose heterodimer with protein S19. Forms two bridges to the 50S subunit in the 70S ribosome.

Functionally, located at the top of the head of the 30S subunit, it contacts several helices of the 16S rRNA. In the 70S ribosome it contacts the 23S rRNA (bridge B1a) and protein L5 of the 50S subunit (bridge B1b), connecting the 2 subunits; these bridges are implicated in subunit movement. Contacts the tRNAs in the A and P-sites. The protein is Small ribosomal subunit protein uS13 of Pseudomonas aeruginosa (strain LESB58).